The primary structure comprises 446 residues: MSDKRRYFGTDGVRGKVGQYPITPDFVLKLGWAAGRVLAKQGTRKVIIGKDTRISGYMLESALEAGLAAAGLKATFTGPMPTPAVAYLTQTFRAEAGIVISASHNPYYDNGIKFFSYEGAKLPDDIELAIEAELDKDIECVESAELGKASRMVDAAGRYIEFCKSTFPSKLSLSGLKLVVDCANGATYHIAPNVFRELGAEVIAMGVEPNGLNINDQVGATDVRALQKRVVEEHAHLGLAFDGDGDRIIMVDHLGNKVDGDQIAYIIARDALRRGELKGGVVGTLMTNLGMENGLKQLGIPFVRAAVGDRYVMEKLLEKGWKIGAENSGHVILLDKVTTGDAIVAGLQVLASVVGSEMTLHELAKGMTLYPQVLENVRFAGDNNPLEADAVKAAVSEVEAELGSKGRVLLRKSGTEPLIRVMVEGEDETLVKQSALKIAQAVKDNC.

Ser103 serves as the catalytic Phosphoserine intermediate. Residues Ser103, Asp242, Asp244, and Asp246 each contribute to the Mg(2+) site. Ser103 bears the Phosphoserine mark.

Belongs to the phosphohexose mutase family. Requires Mg(2+) as cofactor. Post-translationally, activated by phosphorylation.

The catalysed reaction is alpha-D-glucosamine 1-phosphate = D-glucosamine 6-phosphate. Catalyzes the conversion of glucosamine-6-phosphate to glucosamine-1-phosphate. In Vibrio cholerae serotype O1 (strain ATCC 39541 / Classical Ogawa 395 / O395), this protein is Phosphoglucosamine mutase.